The chain runs to 200 residues: LexA repressor (200 aa).

Residues 28-48 constitute a DNA-binding region (H-T-H motif); sequence RAEIARILGFKSANAAEEHIK. Catalysis depends on for autocatalytic cleavage activity residues Ser-118 and Lys-155.

This sequence belongs to the peptidase S24 family. In terms of assembly, homodimer.

It carries out the reaction Hydrolysis of Ala-|-Gly bond in repressor LexA.. Its function is as follows. Represses a number of genes involved in the response to DNA damage (SOS response), including recA and lexA. In the presence of single-stranded DNA, RecA interacts with LexA causing an autocatalytic cleavage which disrupts the DNA-binding part of LexA, leading to derepression of the SOS regulon and eventually DNA repair. The sequence is that of LexA repressor from Cellvibrio japonicus (strain Ueda107) (Pseudomonas fluorescens subsp. cellulosa).